Consider the following 297-residue polypeptide: Urease accessory protein UreD (297 aa).

Residues 1 to 18 (MNSSAASPPAVSPHAAPS) show a composition bias toward low complexity. Disordered regions lie at residues 1 to 20 (MNSS…PSRT) and 178 to 201 (VDQA…PRRR).

Belongs to the UreD family. As to quaternary structure, ureD, UreF and UreG form a complex that acts as a GTP-hydrolysis-dependent molecular chaperone, activating the urease apoprotein by helping to assemble the nickel containing metallocenter of UreC. The UreE protein probably delivers the nickel.

The protein resides in the cytoplasm. Its function is as follows. Required for maturation of urease via the functional incorporation of the urease nickel metallocenter. The polypeptide is Urease accessory protein UreD (Parafrankia sp. (strain EAN1pec)).